The primary structure comprises 130 residues: Small ribosomal subunit protein uS11 (130 aa).

The protein belongs to the universal ribosomal protein uS11 family. In terms of assembly, part of the 30S ribosomal subunit. Interacts with proteins S7 and S18. Binds to IF-3.

Located on the platform of the 30S subunit, it bridges several disparate RNA helices of the 16S rRNA. Forms part of the Shine-Dalgarno cleft in the 70S ribosome. The sequence is that of Small ribosomal subunit protein uS11 from Moorella thermoacetica (strain ATCC 39073 / JCM 9320).